The following is a 345-amino-acid chain: Protein SHI RELATED SEQUENCE 7 (345 aa).

The segment at Leu-7–Ser-28 is disordered. Basic and acidic residues predominate over residues Gly-9 to Ser-28. Zn(2+) contacts are provided by Cys-119, Cys-122, Cys-130, Cys-135, Cys-139, and Cys-146. Positions Cys-119–Cys-146 form a DNA-binding region, zn(2)-C6 fungal-type; degenerate. The disordered stretch occupies residues Ala-168–Gly-200. The Required for homo- and heterodimerization motif lies at Ile-256 to His-259.

Belongs to the SHI protein family. As to expression, mainly expressed in the filaments of flowers, the shoot apex regions and pollen. Also present in leaves.

It localises to the nucleus. Its function is as follows. Transcription activator that binds DNA on 5'-ACTCTAC-3' and promotes auxin homeostasis-regulating gene expression (e.g. YUC genes), as well as genes affecting stamen development, cell expansion and timing of flowering. Synergistically with other SHI-related proteins, regulates gynoecium, stamen and leaf development in a dose-dependent manner, controlling apical-basal patterning. Promotes style and stigma formation, and influences vascular development during gynoecium development. May also have a role in the formation and/or maintenance of the shoot apical meristem (SAM). Regulates anther dehiscence and floral development. This is Protein SHI RELATED SEQUENCE 7 (SRS7) from Arabidopsis thaliana (Mouse-ear cress).